The chain runs to 460 residues: Argininosuccinate lyase (460 aa).

It belongs to the lyase 1 family. Argininosuccinate lyase subfamily.

It is found in the cytoplasm. It catalyses the reaction 2-(N(omega)-L-arginino)succinate = fumarate + L-arginine. The protein operates within amino-acid biosynthesis; L-arginine biosynthesis; L-arginine from L-ornithine and carbamoyl phosphate: step 3/3. The sequence is that of Argininosuccinate lyase from Pelotomaculum thermopropionicum (strain DSM 13744 / JCM 10971 / SI).